A 1041-amino-acid chain; its full sequence is Toll-like receptor 8 (1041 aa).

The N-terminal stretch at 1–26 (MENMFLQSSMLTCIFLLISGSCELCA) is a signal peptide. Over 27–827 (EENFSRSYPC…ELTTCVSDVT (801 aa)) the chain is Extracellular. 5 N-linked (GlcNAc...) asparagine glycosylation sites follow: Asn-29, Asn-42, Asn-80, Asn-88, and Asn-115. Residues Cys-36 and Cys-49 are joined by a disulfide bond. LRR repeat units lie at residues 126–147 (NLRELLLEDNQLPQIPSGLPES), 148–168 (LTELSLIQNNIYNITKEGISR), 171–193 (NLKNLYLAWNCYFNKVCEKTNIE), 202–223 (NLELLSLSFNSLSHVPPKLPSS), 224–244 (LRKLFLSNTQIKYISEEDFKG), and 247–268 (NLTLLDLSGNCPRCFNAPFPCV). Asn-160 is a glycosylation site (N-linked (GlcNAc...) asparagine). A disulfide bridge links Cys-181 with Cys-187. Asn-247 carries N-linked (GlcNAc...) asparagine glycosylation. 2 disulfides stabilise this stretch: Cys-257-Cys-270 and Cys-260-Cys-267. N-linked (GlcNAc...) asparagine glycosylation is found at Asn-285 and Asn-293. 3 LRR repeats span residues 288–309 (QLRYLNLSSTSLRKINAAWFKN), 312–334 (HLKVLDLEFNYLVGEIASGAFLT), and 338–360 (RLEILDLSFNYIKGSYPQHINIS). N-linked (GlcNAc...) asparagine glycosylation is found at Asn-358 and Asn-362. LRR repeat units follow at residues 368–389 (SLRALHLRGYVFQELREDDFQP), 395–416 (NLSTINLGINFIKQIDFKLFQN), and 419–440 (NLEIIYLSENRISPLVKDTRQS). Asn-395 and Asn-416 each carry an N-linked (GlcNAc...) asparagine glycan. A glycan (N-linked (GlcNAc...) asparagine) is linked at Asn-443. Cys-479 and Cys-509 are joined by a disulfide. LRR repeat units follow at residues 482–503 (YGKALDLSLNSIFFIGPNQFEN), 506–527 (DIACLNLSANSNAQVLSGTEFS), 531–551 (HVKYLDLTNNRLDFDNASALT), and 555–577 (DLEVLDLSYNSHYFRIAGVTHHL). Asn-511 and Asn-546 each carry an N-linked (GlcNAc...) asparagine glycan. N-linked (GlcNAc...) asparagine glycosylation is found at Asn-582 and Asn-590. LRR repeat units lie at residues 585-606 (NLKVLNLSHNNIYTLTDKYNLE), 609-630 (SLVELVFSGNRLDILWNDDDNR), 640-661 (NLTRLDLSLNRLKHIPNEAFLN), 665-685 (SLTELHINDNMLKFFNWTLLQ), 689-710 (RLELLDLRGNKLLFLTDSLSDF), 713-734 (SLRTLLLSHNRISHLPSGFLSE), and 737-758 (SLKHLDLSSNLLKTINKSALET). N-linked (GlcNAc...) asparagine glycosylation is found at Asn-640 and Asn-680. Asn-752 is a glycosylation site (N-linked (GlcNAc...) asparagine). The region spanning 772–824 (NPFECTCDIGDFRRWMDEHLNVKIPRLVDVICASPGDQRGKSIVSLELTTCVS) is the LRRCT domain. A disulfide bond links Cys-776 and Cys-803. Residues 828–848 (AVILFFFTFFITTMVMLAALA) form a helical membrane-spanning segment. Residues 849 to 1041 (HHLFYWDVWF…NMYVDSIKQY (193 aa)) are Cytoplasmic-facing. One can recognise a TIR domain in the interval 878 to 1022 (TFYDAYISYD…LFWQTLRNVV (145 aa)).

Belongs to the Toll-like receptor family. As to quaternary structure, homodimer. Interacts with MYD88 via their respective TIR domains. Interacts with UNC93B1. Interacts with BTK. Interacts with SMPDL3B. Post-translationally, ubiquitinated by RNF216; leading to degradation by the proteasome. In terms of processing, proteolytic processing occurs in monocytes and monocyte-derived macrophages by both furin-like proprotein convertase and cathepsins. The cleavage is necessary for dimer formation and subsequent activation. In terms of tissue distribution, expressed in myeloid dendritic cells, monocytes, and monocyte-derived dendritic cells.

It localises to the endosome membrane. Its activity is regulated as follows. Activated by RNAs having enough uridines. Functionally, endosomal receptor that plays a key role in innate and adaptive immunity. Controls host immune response against pathogens through recognition of RNA degradation products specific to microorganisms that are initially processed by RNASET2. Recognizes GU-rich single-stranded RNA (GU-rich RNA) derived from SARS-CoV-2, SARS-CoV-1 and HIV-1 viruses. Upon binding to agonists, undergoes dimerization that brings TIR domains from the two molecules into direct contact, leading to the recruitment of TIR-containing downstream adapter MYD88 through homotypic interaction. In turn, the Myddosome signaling complex is formed involving IRAK4, IRAK1, TRAF6, TRAF3 leading to activation of downstream transcription factors NF-kappa-B and IRF7 to induce pro-inflammatory cytokines and interferons, respectively. The sequence is that of Toll-like receptor 8 from Homo sapiens (Human).